Reading from the N-terminus, the 419-residue chain is Dual specificity protein phosphatase 7 (419 aa).

Residues Met1–Thr47 form a disordered region. Residues Ala10 to Ser29 are compositionally biased toward low complexity. A compositionally biased stretch (gly residues) spans Pro31–Thr47. The Rhodanese domain maps to Gly68–Glu187. Positions Cys216–Ser240 are disordered. The span at Ser227–Ser240 shows a compositional bias: polar residues. Positions Phe244–Leu387 constitute a Tyrosine-protein phosphatase domain. The active-site Phosphocysteine intermediate is the Cys331. Residue Cys331–Arg337 participates in substrate binding.

The protein belongs to the protein-tyrosine phosphatase family. Non-receptor class dual specificity subfamily. Interacts with MAPK1/ERK2; the interaction enhances DUSP7 phosphatase activity. Strongly expressed in liver. Expressed at significantly higher levels in malignant hematopoietic cells than in corresponding non-malignant cells.

It is found in the cytoplasm. It catalyses the reaction O-phospho-L-tyrosyl-[protein] + H2O = L-tyrosyl-[protein] + phosphate. The enzyme catalyses O-phospho-L-seryl-[protein] + H2O = L-seryl-[protein] + phosphate. It carries out the reaction O-phospho-L-threonyl-[protein] + H2O = L-threonyl-[protein] + phosphate. With respect to regulation, strongly inhibited by sodium orthovanadate. Its function is as follows. Dual specificity protein phosphatase. Shows high activity towards MAPK1/ERK2. Also has lower activity towards MAPK14 and MAPK8. In arrested oocytes, plays a role in meiotic resumption. Promotes nuclear envelope breakdown and activation of the CDK1/Cyclin-B complex in oocytes, probably by dephosphorylating and inactivating the conventional protein kinase C (cPKC) isozyme PRKCB. May also inactivate PRKCA and/or PRKCG. Also important in oocytes for normal chromosome alignment on the metaphase plate and progression to anaphase, where it might regulate activity of the spindle-assembly checkpoint (SAC) complex. This chain is Dual specificity protein phosphatase 7, found in Homo sapiens (Human).